We begin with the raw amino-acid sequence, 30 residues long: Cysteine-rich venom protein annuliferin-a (30 aa).

Belongs to the CRISP family. Post-translationally, contains 8 disulfide bonds. As to expression, expressed by the venom gland.

The protein resides in the secreted. Its function is as follows. Inhibits calcium-activated potassium channels (KCa), voltage-gated potassium channel (Kv), and the calcium release channel/ryanodine receptor (RyR). In Naja annulifera (Banded Egyptian cobra), this protein is Cysteine-rich venom protein annuliferin-a.